The sequence spans 804 residues: Ral guanine nucleotide dissociation stimulator-like 1 (804 aa).

The region spanning Lys-101 to Arg-231 is the N-terminal Ras-GEF domain. The 270-residue stretch at Glu-270–Leu-539 folds into the Ras-GEF domain. Disordered regions lie at residues Asn-564–His-611 and Ser-640–Pro-676. 2 stretches are compositionally biased toward low complexity: residues Pro-581–Met-607 and Ser-640–Thr-649. Polar residues predominate over residues Ile-661 to Ser-671. Residues Asp-684–Ser-771 enclose the Ras-associating domain.

In terms of biological role, probable guanine nucleotide exchange factor. The sequence is that of Ral guanine nucleotide dissociation stimulator-like 1 (rgl1) from Danio rerio (Zebrafish).